A 605-amino-acid chain; its full sequence is Terpenoid synthase 18 (605 aa).

Residues Asp356, Asp360, Asn500, Thr504, and Glu508 each coordinate Mg(2+). Residues 356 to 360 carry the DDXXD motif motif; it reads DDTYD.

The protein belongs to the terpene synthase family. Tpsa subfamily. Mg(2+) serves as cofactor. Requires Mn(2+) as cofactor. In terms of tissue distribution, predominantly expressed in flowers and siliques but also in roots and leaves.

It is found in the cytoplasm. Its pathway is secondary metabolite biosynthesis; terpenoid biosynthesis. In Arabidopsis thaliana (Mouse-ear cress), this protein is Terpenoid synthase 18 (TPS18).